The following is a 244-amino-acid chain: Chalcone--flavanone isomerase (244 aa).

3 residues coordinate substrate: T57, N122, and S199.

Belongs to the chalcone isomerase family.

The catalysed reaction is a chalcone = a flavanone.. Its pathway is secondary metabolite biosynthesis; flavonoid biosynthesis. Its function is as follows. Catalyzes the intramolecular cyclization of bicyclic chalcones into tricyclic (S)-flavanones. Responsible for the isomerization of 4,2',4',6'-tetrahydroxychalcone (also termed chalcone) into naringenin. This is Chalcone--flavanone isomerase (CHI) from Arabidopsis lyrata subsp. petraea (Northern rock-cress).